The chain runs to 1107 residues: MMTSVGTNRARGNWEQPQNQNQTQHKQRPQATAEQIRLAQMISDHNDADFEEKVKQLIDITGKNQDECVIALHDCNGDVNRAINVLLEGNPDTHSWEMVGKKKGVSGQKDGGQTESNEEGKENRDRDRDYSRRRGGPPRRGRGASRGREFRGQENGLDGTKSGGPSGRGTDRGRRGRGRGRGSSGRRGGRFSAQGMGTFNPADYAEPANTDDNYGNSSGNTWNNTGHFEPDDGTRLDFIGVEGSNYPRKFETAPGAWRTATEEWGTEDWNEDLSETKIFTASNVSSVPLPAENVTITAGQRIDLAVLLGKTPSSMENDSSNLDPSQAPSLAQPLVFSNSKQNAISQPASGSTFSHHSMVSMLGKGFGDVGEAKGGSTTGSQFLEQFKTAQALAQLAAQHSQSGSTTTSSWDMGSTTQSPSLVQYDLKSANDSTVHSPFTKRQAFTPSSTMMEVFLQEKPPAVATSTAAPPPPSSPLPSKSTSAPQMSPGSSDNQSSSPQPAQQKLKQQKKKTSLTSKIPALAVEMPGSADISGLNLQFGALQFGSEPVLSDYESTPTTSASSSQAPSSLYTSTASESSSTVSSNQSQESGYQSGPIQSTTYTSQNNAQGPLYEQRSTQTRRYPSSISSSPQKDLTQAKNGFSSVQATQLQTTQSVEGATGSAVKSESPSTSSIPSLNETVPAASLLTTANQHSSSLSGLSHTEEIPNTTTTQHSSALSTQQNTLSSSTSSGRTSTSTLLHTSVESEANLHSSSSTFSTTSSTVSAPPPVVSVSSSLNSGSSLGLSLGSNSTVTASTRSSVATTSGKAPPNLPPGVPPLLPNPYIMAPGLLHAYPPQVYGYDDLQMLQTRFPLDYYSIPFPTPTTPLTGRDGSLASNPYSGDLTKFGRGDASSPAPATTLAQPQQNQTQTHHTTQQTFLNPALPPGYSYTSLPYYTGVPGLPSTFQYGPAVFPVAPTSSKQHGVNVSVNASATPFQQPSGYGSHGYNTGVSVTSSNTGVPDISGSVYSKTQQSFEKQGFHSGTPAASFNLPSALGSGGPINPATAAAYPPAPFMHILTPHQQPHSQILHHHLQQDGQTGSGQRSQTSSIPQKPQTNKSAYNSYSWGAN.

At Met-1 the chain carries N-acetylmethionine. The disordered stretch occupies residues 1–33 (MMTSVGTNRARGNWEQPQNQNQTQHKQRPQATA). In terms of domain architecture, UBA spans 49 to 89 (DFEEKVKQLIDITGKNQDECVIALHDCNGDVNRAINVLLEG). The segment at 92–229 (DTHSWEMVGK…NTWNNTGHFE (138 aa)) is disordered. Positions 118–132 (EEGKENRDRDRDYSR) are enriched in basic and acidic residues. The segment covering 133-145 (RRGGPPRRGRGAS) has biased composition (basic residues). Arg-187 and Arg-190 each carry asymmetric dimethylarginine. Over residues 213-226 (NYGNSSGNTWNNTG) the composition is skewed to low complexity. Phosphoserine occurs at positions 376, 380, and 436. Thr-445 carries the phosphothreonine modification. Disordered regions lie at residues 461-513 (AVAT…KKTS), 550-676 (SDYE…IPSL), and 689-814 (ANQH…LPPG). A phosphoserine mark is found at Ser-474, Ser-487, Ser-490, Ser-491, and Ser-497. Low complexity-rich tracts occupy residues 494-505 (QSSSPQPAQQKL) and 554-589 (STPT…SQES). Over residues 590–656 (GYQSGPIQST…TQLQTTQSVE (67 aa)) the composition is skewed to polar residues. A phosphoserine mark is found at Ser-624, Ser-625, Ser-628, and Ser-629. Residues 665–675 (SESPSTSSIPS) are compositionally biased toward low complexity. Over residues 689–713 (ANQHSSSLSGLSHTEEIPNTTTTQH) the composition is skewed to polar residues. The span at 714–804 (SSALSTQQNT…STRSSVATTS (91 aa)) shows a compositional bias: low complexity. Phosphoserine occurs at positions 872 and 879. Disordered stretches follow at residues 885-921 (FGRG…LNPA) and 1060-1107 (QQPH…WGAN). 2 stretches are compositionally biased toward low complexity: residues 893 to 916 (PAPA…TQQT) and 1073 to 1087 (QDGQ…QTSS). A compositionally biased stretch (polar residues) spans 1088–1107 (IPQKPQTNKSAYNSYSWGAN).

As to quaternary structure, interacts with BMI1. Part of a complex consisting of UBAP2L, BMI1 and RNF2. Interacts with G3BP1 (via NTF2 domain); promoting stress granule formation.

It is found in the nucleus. The protein resides in the chromosome. The protein localises to the cytoplasm. It localises to the stress granule. In terms of biological role, recruits the ubiquitination machinery to RNA polymerase II for polyubiquitination, removal and degradation, when the transcription-coupled nucleotide excision repair (TC-NER) machinery fails to resolve DNA damage. Plays an important role in the activity of long-term repopulating hematopoietic stem cells (LT-HSCs). Is a regulator of stress granule assembly, required for their efficient formation. Required for proper brain development and neocortex lamination. The sequence is that of Ubiquitin-associated protein 2-like from Mus musculus (Mouse).